The primary structure comprises 147 residues: Probable disulfide formation protein (147 aa).

A helical membrane pass occupies residues 9-28; that stretch reads NYSLYFAWLTALIATLGSLY. A disulfide bridge links Cys38 with Cys41. Helical transmembrane passes span 43–62 and 69–86; these read YQRV…AYRT and YALP…YQYL. Residues Cys99 and Cys106 are joined by a disulfide bond. Residues 115–138 traverse the membrane as a helical segment; the sequence is GFITLPFLGMLATLIMSFFLIMAF.

It belongs to the DsbB family. BdbC subfamily.

The protein localises to the cell inner membrane. Required for disulfide bond formation in some proteins. In Coxiella burnetii (strain CbuK_Q154) (Coxiella burnetii (strain Q154)), this protein is Probable disulfide formation protein.